The following is a 343-amino-acid chain: Tetraacyldisaccharide 4'-kinase (343 aa).

51–58 lines the ATP pocket; that stretch reads HGGGAGKT.

Belongs to the LpxK family.

The enzyme catalyses a lipid A disaccharide + ATP = a lipid IVA + ADP + H(+). It functions in the pathway glycolipid biosynthesis; lipid IV(A) biosynthesis; lipid IV(A) from (3R)-3-hydroxytetradecanoyl-[acyl-carrier-protein] and UDP-N-acetyl-alpha-D-glucosamine: step 6/6. Transfers the gamma-phosphate of ATP to the 4'-position of a tetraacyldisaccharide 1-phosphate intermediate (termed DS-1-P) to form tetraacyldisaccharide 1,4'-bis-phosphate (lipid IVA). This chain is Tetraacyldisaccharide 4'-kinase, found in Rhodopseudomonas palustris (strain BisB18).